The following is a 149-amino-acid chain: L-alanine exporter AlaE (149 aa).

4 helical membrane-spanning segments follow: residues 16 to 36 (FAMV…LSGM), 46 to 66 (LVAI…RDAI), 85 to 105 (VLAY…TVGA), and 112 to 132 (AAVS…GYFL).

The protein belongs to the AlaE exporter family.

The protein resides in the cell inner membrane. Its function is as follows. Exports L-alanine. This chain is L-alanine exporter AlaE, found in Citrobacter koseri (strain ATCC BAA-895 / CDC 4225-83 / SGSC4696).